A 99-amino-acid polypeptide reads, in one-letter code: MARITVEDCLEVVNNRFELVMMASKRARQLANGVPPLIENTNSEDKPTVLALREIAARKIDSKMIDEIEKAERERTEREAMEWAAAEVVADEDMSKSDD.

The protein belongs to the RNA polymerase subunit omega family. The RNAP catalytic core consists of 2 alpha, 1 beta, 1 beta' and 1 omega subunit. When a sigma factor is associated with the core the holoenzyme is formed, which can initiate transcription.

It carries out the reaction RNA(n) + a ribonucleoside 5'-triphosphate = RNA(n+1) + diphosphate. In terms of biological role, promotes RNA polymerase assembly. Latches the N- and C-terminal regions of the beta' subunit thereby facilitating its interaction with the beta and alpha subunits. This Xylella fastidiosa (strain 9a5c) protein is DNA-directed RNA polymerase subunit omega (rpoZ).